A 217-amino-acid chain; its full sequence is Lectin ADEL (217 aa).

Disulfide bonds link Cys-5–Cys-187, Cys-42–Cys-68, Cys-61–Cys-77, Cys-114–Cys-135, and Cys-142–Cys-206. Asn-30 carries N-linked (GlcNAc...) asparagine glycosylation. 2 N-linked (GlcNAc...) asparagine glycosylation sites follow: Asn-102 and Asn-126.

Homodimer; disulfide-linked. Contains disulfide bonds.

Functionally, binds in decreasing order of affinity: galacturonic acid, D-galactosamine, methyl-alpha-D-galactopyranoside and further galactose-containing carbohydrates. Has hemagglutinating activity against human and rabbit erythrocytes. The protein is Lectin ADEL of Aplysia dactylomela (Spotted sea hare).